A 159-amino-acid chain; its full sequence is Transcription antitermination protein NusB (159 aa).

The protein belongs to the NusB family.

Its function is as follows. Involved in transcription antitermination. Required for transcription of ribosomal RNA (rRNA) genes. Binds specifically to the boxA antiterminator sequence of the ribosomal RNA (rrn) operons. This is Transcription antitermination protein NusB from Xanthomonas campestris pv. campestris (strain 8004).